Here is a 486-residue protein sequence, read N- to C-terminus: Zinc finger chaperone ZPR1 (486 aa).

The interval 1-31 (MSEQKEDLFKPVGEAAAEVEDESIAEQNKAN) is disordered. Ser-23 bears the Phosphoserine mark. 2 consecutive C4-type zinc fingers follow at residues 54 to 86 (CMNCGKNGTTRLLLTSIPYFREIIIMSFDCPHC) and 295 to 327 (CPSCTQECETHMKPVNIPHFKEVIIMSTVCDHC). Residue Thr-407 is modified to Phosphothreonine.

The protein belongs to the ZPR1 family. In terms of assembly, interacts with elongation factor 1-alpha.

The protein resides in the cytoplasm. It is found in the nucleus. Functionally, acts as a protein folding chaperone for elongation factor 1-alpha. The protein is Zinc finger chaperone ZPR1 of Saccharomyces cerevisiae (strain ATCC 204508 / S288c) (Baker's yeast).